Consider the following 444-residue polypeptide: Argininosuccinate synthase (444 aa).

ATP is bound by residues 17–25 (AFSGGLDTS) and A43. Residue Y99 participates in L-citrulline binding. Positions 129 and 131 each coordinate ATP. 3 residues coordinate L-aspartate: T131, N135, and D136. N135 serves as a coordination point for L-citrulline. D136 is a binding site for ATP. 2 residues coordinate L-citrulline: R139 and S192. Residue D194 participates in ATP binding. L-citrulline-binding residues include T201, E203, and E280.

Belongs to the argininosuccinate synthase family. Type 2 subfamily. Homotetramer.

Its subcellular location is the cytoplasm. It carries out the reaction L-citrulline + L-aspartate + ATP = 2-(N(omega)-L-arginino)succinate + AMP + diphosphate + H(+). It functions in the pathway amino-acid biosynthesis; L-arginine biosynthesis; L-arginine from L-ornithine and carbamoyl phosphate: step 2/3. This Delftia acidovorans (strain DSM 14801 / SPH-1) protein is Argininosuccinate synthase.